The primary structure comprises 144 residues: GYVNGWNAAEETLEANREAGEFDSSAGAIRNVTHNGCGHILHDLFWQNMSPEGGDEPAGALADRIAEDFGSYDAWKGEFEAAAGAAGGWALLVYDSFSNQLRNVVVDKHDQGALWGSHPILALDVWEHSYYHDYGPARGDFISA.

3 residues coordinate Mn(2+): His42, Asp124, and His128.

This sequence belongs to the iron/manganese superoxide dismutase family. The cofactor is Mn(2+).

The enzyme catalyses 2 superoxide + 2 H(+) = H2O2 + O2. In terms of biological role, destroys superoxide anion radicals which are normally produced within the cells and which are toxic to biological systems. The sequence is that of Superoxide dismutase [Mn] 1 (sod1) from Haloferax mediterranei (Halobacterium mediterranei).